A 338-amino-acid polypeptide reads, in one-letter code: 1-aminocyclopropane-1-carboxylate deaminase (338 aa).

Lys-51 carries the N6-(pyridoxal phosphate)lysine modification. The Nucleophile role is filled by Ser-78.

It belongs to the ACC deaminase/D-cysteine desulfhydrase family. In terms of assembly, homotrimer. The cofactor is pyridoxal 5'-phosphate.

The catalysed reaction is 1-aminocyclopropane-1-carboxylate + H2O = 2-oxobutanoate + NH4(+). Functionally, catalyzes a cyclopropane ring-opening reaction, the irreversible conversion of 1-aminocyclopropane-1-carboxylate (ACC) to ammonia and alpha-ketobutyrate. Allows growth on ACC as a nitrogen source. This chain is 1-aminocyclopropane-1-carboxylate deaminase, found in Methylibium petroleiphilum (strain ATCC BAA-1232 / LMG 22953 / PM1).